Here is a 360-residue protein sequence, read N- to C-terminus: Peptide chain release factor 1 (360 aa).

Position 235 is an N5-methylglutamine (Gln-235). The span at 280-293 shows a compositional bias: basic and acidic residues; sequence DKQSHEQQAKEAAT. A disordered region spans residues 280-300; sequence DKQSHEQQAKEAATRKSLIGS.

Belongs to the prokaryotic/mitochondrial release factor family. In terms of processing, methylated by PrmC. Methylation increases the termination efficiency of RF1.

The protein resides in the cytoplasm. Peptide chain release factor 1 directs the termination of translation in response to the peptide chain termination codons UAG and UAA. The chain is Peptide chain release factor 1 from Paraburkholderia phytofirmans (strain DSM 17436 / LMG 22146 / PsJN) (Burkholderia phytofirmans).